Reading from the N-terminus, the 257-residue chain is Hydroxyacylglutathione hydrolase (257 aa).

Residues His-54, His-56, Asp-58, His-59, His-113, Asp-137, and His-175 each coordinate Zn(2+).

The protein belongs to the metallo-beta-lactamase superfamily. Glyoxalase II family. Monomer. Zn(2+) serves as cofactor.

It carries out the reaction an S-(2-hydroxyacyl)glutathione + H2O = a 2-hydroxy carboxylate + glutathione + H(+). It functions in the pathway secondary metabolite metabolism; methylglyoxal degradation; (R)-lactate from methylglyoxal: step 2/2. Thiolesterase that catalyzes the hydrolysis of S-D-lactoyl-glutathione to form glutathione and D-lactic acid. The polypeptide is Hydroxyacylglutathione hydrolase (Trichodesmium erythraeum (strain IMS101)).